The following is a 416-amino-acid chain: Exodeoxyribonuclease 7 large subunit (416 aa).

Belongs to the XseA family. In terms of assembly, heterooligomer composed of large and small subunits.

The protein resides in the cytoplasm. It catalyses the reaction Exonucleolytic cleavage in either 5'- to 3'- or 3'- to 5'-direction to yield nucleoside 5'-phosphates.. Functionally, bidirectionally degrades single-stranded DNA into large acid-insoluble oligonucleotides, which are then degraded further into small acid-soluble oligonucleotides. The sequence is that of Exodeoxyribonuclease 7 large subunit from Sulfurimonas denitrificans (strain ATCC 33889 / DSM 1251) (Thiomicrospira denitrificans (strain ATCC 33889 / DSM 1251)).